A 636-amino-acid chain; its full sequence is Threonine--tRNA ligase (636 aa).

Positions 1–63 (MINITTSFPN…SKDGSVDPVT (63 aa)) constitute a TGS domain. The segment at 244–535 (DHRKIAKDLG…LIEHYAGNIP (292 aa)) is catalytic. Zn(2+) is bound by residues C335, H386, and H512.

Belongs to the class-II aminoacyl-tRNA synthetase family. Homodimer. It depends on Zn(2+) as a cofactor.

The protein resides in the cytoplasm. The enzyme catalyses tRNA(Thr) + L-threonine + ATP = L-threonyl-tRNA(Thr) + AMP + diphosphate + H(+). Its function is as follows. Catalyzes the attachment of threonine to tRNA(Thr) in a two-step reaction: L-threonine is first activated by ATP to form Thr-AMP and then transferred to the acceptor end of tRNA(Thr). Also edits incorrectly charged L-seryl-tRNA(Thr). The chain is Threonine--tRNA ligase from Anaplasma marginale (strain Florida).